A 604-amino-acid polypeptide reads, in one-letter code: Ran-binding protein 10 (604 aa).

The B30.2/SPRY domain maps to 23-210 (LNERLKRLYP…VDANFGQQPF (188 aa)). The region spanning 241–273 (WQAVLQNMVSSYLVHHGYCATAMAFARATETMI) is the LisH domain. The 58-residue stretch at 279-336 (SIKNRQRIQKLVLAGRVGEAIDATQQLYPGLLEHNPNLLFMLKCRQFVEMVNGTDSEV) folds into the CTLH domain. The tract at residues 342–454 (RSPKSQDSYP…HYSNGVTESS (113 aa)) is disordered. Polar residues-rich tracts occupy residues 343–356 (SPKS…SPNM) and 371–396 (GADS…YTGI). Residues 397-420 (SSASSSPSSSPSSVNYSESNSTDS) show a composition bias toward low complexity. The span at 421-434 (TKSQPHSATSNQET) shows a compositional bias: polar residues.

It belongs to the RANBP9/10 family.

Its function is as follows. May act as an adapter protein to couple membrane receptors to intracellular signaling pathways. The protein is Ran-binding protein 10 (ranbp10) of Danio rerio (Zebrafish).